Consider the following 282-residue polypeptide: Putative dolichyldiphosphatase (282 aa).

2 helical membrane-spanning segments follow: residues 26-46 (LLCA…ATLI) and 93-113 (MPSS…LFLL). The segment at 121 to 153 (QQQQQQQKQKQRERKKQVTNVKTTTTNGSGNGS) is disordered. The span at 138 to 148 (VTNVKTTTTNG) shows a compositional bias: low complexity. Helical transmembrane passes span 173–193 (WSFA…GAVA) and 207–227 (VLVG…VTHV).

Belongs to the dolichyldiphosphatase family.

The protein localises to the endoplasmic reticulum membrane. The catalysed reaction is a di-trans,poly-cis-dolichyl diphosphate + H2O = a di-trans,poly-cis-dolichyl phosphate + phosphate + H(+). It functions in the pathway protein modification; protein glycosylation. The chain is Putative dolichyldiphosphatase from Neurospora crassa (strain ATCC 24698 / 74-OR23-1A / CBS 708.71 / DSM 1257 / FGSC 987).